A 203-amino-acid chain; its full sequence is Outer-membrane lipoprotein LolB (203 aa).

The signal sequence occupies residues Met-1–Gly-18. The N-palmitoyl cysteine moiety is linked to residue Cys-19. Cys-19 carries S-diacylglycerol cysteine lipidation.

Belongs to the LolB family. As to quaternary structure, monomer.

It is found in the cell outer membrane. Its function is as follows. Plays a critical role in the incorporation of lipoproteins in the outer membrane after they are released by the LolA protein. This Vibrio parahaemolyticus serotype O3:K6 (strain RIMD 2210633) protein is Outer-membrane lipoprotein LolB.